A 418-amino-acid polypeptide reads, in one-letter code: Pigment epithelium-derived factor (418 aa).

Residues 1 to 19 (MQALVLLLCIGALLGHSSC) form the signal peptide. A Pyrrolidone carboxylic acid modification is found at Q20. The disordered stretch occupies residues 20 to 39 (QNPASPPEEGSPDPDSTGAL). A phosphoserine; by CK2 mark is found at S24 and S114. The residue at position 227 (S227) is a Phosphoserine; by PKA. N-linked (GlcNAc...) (complex) asparagine glycosylation is present at N285. The tract at residues 371–383 (TTPSPGLQPAHLT) is O-glycosylated at one site.

Belongs to the serpin family. Interacts with PNPLA2; this interaction stimulates the phospholipase A2 activity of PNPLA2. Post-translationally, the N-terminus is blocked. Extracellular phosphorylation enhances antiangiogenic activity. N- and O-glycosylated. O-glycosylated with a core 1 or possibly core 8 glycan. Retinal pigment epithelial cells and blood plasma.

Its subcellular location is the secreted. It is found in the melanosome. Neurotrophic protein; induces extensive neuronal differentiation in retinoblastoma cells. Potent inhibitor of angiogenesis. As it does not undergo the S (stressed) to R (relaxed) conformational transition characteristic of active serpins, it exhibits no serine protease inhibitory activity. The chain is Pigment epithelium-derived factor (SERPINF1) from Homo sapiens (Human).